The sequence spans 318 residues: Putative fimbrium tip subunit Fim1F (318 aa).

The signal sequence occupies residues 1 to 24 (MRFNVVLFMLIVALLGGLSTCSSE). Residues 25 to 50 (VPIGFDTDELSFDMSLVLLTGDMQTK) constitute a propeptide that is removed on maturation.

It belongs to the bacteroidetes fimbrillin superfamily. FimA/Mfa1 family. May be part of the fimbrial tip.

It is found in the fimbrium. Its function is as follows. Putative component of the fimbrium tip. Fimbriae are filamentous appendages on the cell surface that mediate cell adhesion and biofilm formation. This Parabacteroides distasonis (strain ATCC 8503 / DSM 20701 / CIP 104284 / JCM 5825 / NCTC 11152) protein is Putative fimbrium tip subunit Fim1F.